The primary structure comprises 540 residues: L-aspartate oxidase (540 aa).

FAD is bound by residues 16 to 19 (SGAA), Lys38, 45 to 52 (STFYAQGG), 161 to 162 (NA), and Asp223. Succinate contacts are provided by residues His244 and 259–260 (TE). Arg290 (proton donor/acceptor) is an active-site residue. Glu375 provides a ligand contact to FAD. Ser389 provides a ligand contact to succinate. Position 391-392 (391-392 (SL)) interacts with FAD.

It belongs to the FAD-dependent oxidoreductase 2 family. NadB subfamily. As to quaternary structure, monomer. Homodimer. Both the monomeric and dimeric forms of the enzyme are catalytically active. FAD serves as cofactor.

Its subcellular location is the cytoplasm. It catalyses the reaction L-aspartate + O2 = iminosuccinate + H2O2. It carries out the reaction fumarate + L-aspartate = iminosuccinate + succinate. It functions in the pathway cofactor biosynthesis; NAD(+) biosynthesis; iminoaspartate from L-aspartate (oxidase route): step 1/1. With respect to regulation, inhibited by the product iminoaspartate. Competitively inhibited by mesotartrate. NAD acts as a competitive inhibitor to FAD. Inhibited by iodoacetic acid, diethylpyrocarbonate and tetranitromethane. Its function is as follows. Catalyzes the oxidation of L-aspartate to iminoaspartate, the first step in the de novo biosynthesis of NAD(+). Can use either oxygen or fumarate as electron acceptors, which allows the enzyme to be functional under aerobic and anaerobic conditions. In vivo, fumarate is used under anaerobic conditions, and oxygen is the predominant electron acceptor under aerobic conditions due to the lower fumarate levels. In vitro, fumarate is a more efficient electron acceptor and is kinetically superior to oxygen. This is L-aspartate oxidase from Escherichia coli (strain K12).